The following is a 66-amino-acid chain: MPKLKTKSSAKKRFKITASGKVVAAQSTKRHGMTKRSKRSLRTRRGTALMSAADTRIVAPFMPYGL.

A disordered region spans residues serine 19–arginine 45. Positions threonine 28–arginine 45 are enriched in basic residues.

The protein belongs to the bacterial ribosomal protein bL35 family.

The polypeptide is Large ribosomal subunit protein bL35 (Anaplasma phagocytophilum (strain HZ)).